A 312-amino-acid chain; its full sequence is tRNA pseudouridine synthase B (312 aa).

Asp-38 functions as the Nucleophile in the catalytic mechanism.

Belongs to the pseudouridine synthase TruB family. Type 1 subfamily.

It catalyses the reaction uridine(55) in tRNA = pseudouridine(55) in tRNA. Its function is as follows. Responsible for synthesis of pseudouridine from uracil-55 in the psi GC loop of transfer RNAs. This chain is tRNA pseudouridine synthase B, found in Syntrophus aciditrophicus (strain SB).